A 260-amino-acid chain; its full sequence is Hydroxyethylthiazole kinase 1 (260 aa).

Met-39 contributes to the substrate binding site. Positions 115 and 160 each coordinate ATP. Gly-187 is a binding site for substrate.

The protein belongs to the Thz kinase family. Requires Mg(2+) as cofactor.

The enzyme catalyses 5-(2-hydroxyethyl)-4-methylthiazole + ATP = 4-methyl-5-(2-phosphooxyethyl)-thiazole + ADP + H(+). It participates in cofactor biosynthesis; thiamine diphosphate biosynthesis; 4-methyl-5-(2-phosphoethyl)-thiazole from 5-(2-hydroxyethyl)-4-methylthiazole: step 1/1. In terms of biological role, catalyzes the phosphorylation of the hydroxyl group of 4-methyl-5-beta-hydroxyethylthiazole (THZ). The polypeptide is Hydroxyethylthiazole kinase 1 (Streptococcus pneumoniae (strain ATCC 700669 / Spain 23F-1)).